The sequence spans 319 residues: Acetyl-coenzyme A carboxylase carboxyl transferase subunit alpha (319 aa).

A CoA carboxyltransferase C-terminal domain is found at 35–296; the sequence is DLDKEIEQLE…KATLLRQLAE (262 aa).

This sequence belongs to the AccA family. As to quaternary structure, acetyl-CoA carboxylase is a heterohexamer composed of biotin carboxyl carrier protein (AccB), biotin carboxylase (AccC) and two subunits each of ACCase subunit alpha (AccA) and ACCase subunit beta (AccD).

The protein resides in the cytoplasm. The enzyme catalyses N(6)-carboxybiotinyl-L-lysyl-[protein] + acetyl-CoA = N(6)-biotinyl-L-lysyl-[protein] + malonyl-CoA. It participates in lipid metabolism; malonyl-CoA biosynthesis; malonyl-CoA from acetyl-CoA: step 1/1. Functionally, component of the acetyl coenzyme A carboxylase (ACC) complex. First, biotin carboxylase catalyzes the carboxylation of biotin on its carrier protein (BCCP) and then the CO(2) group is transferred by the carboxyltransferase to acetyl-CoA to form malonyl-CoA. This Vibrio vulnificus (strain CMCP6) protein is Acetyl-coenzyme A carboxylase carboxyl transferase subunit alpha.